Here is a 247-residue protein sequence, read N- to C-terminus: Adenosylcobinamide-GDP ribazoletransferase (247 aa).

5 helical membrane passes run 34 to 54 (IITF…VFMV), 59 to 79 (CGAP…TGGF), 113 to 133 (GGLA…ELAL), 138 to 158 (ILAS…LLMY), and 194 to 214 (VLLP…AIFI).

This sequence belongs to the CobS family. Mg(2+) serves as cofactor.

It localises to the cell inner membrane. The catalysed reaction is alpha-ribazole + adenosylcob(III)inamide-GDP = adenosylcob(III)alamin + GMP + H(+). It carries out the reaction alpha-ribazole 5'-phosphate + adenosylcob(III)inamide-GDP = adenosylcob(III)alamin 5'-phosphate + GMP + H(+). Its pathway is cofactor biosynthesis; adenosylcobalamin biosynthesis; adenosylcobalamin from cob(II)yrinate a,c-diamide: step 7/7. Joins adenosylcobinamide-GDP and alpha-ribazole to generate adenosylcobalamin (Ado-cobalamin). Also synthesizes adenosylcobalamin 5'-phosphate from adenosylcobinamide-GDP and alpha-ribazole 5'-phosphate. The chain is Adenosylcobinamide-GDP ribazoletransferase from Escherichia coli O157:H7.